We begin with the raw amino-acid sequence, 201 residues long: Recombination protein RecR (201 aa).

A C4-type zinc finger spans residues 57 to 72 (CADCRTFTEQDVCNIC). The 96-residue stretch at 81–176 (GQICVVESPA…EASRIAHGVP (96 aa)) folds into the Toprim domain.

The protein belongs to the RecR family.

Its function is as follows. May play a role in DNA repair. It seems to be involved in an RecBC-independent recombinational process of DNA repair. It may act with RecF and RecO. This chain is Recombination protein RecR, found in Salmonella choleraesuis (strain SC-B67).